A 644-amino-acid chain; its full sequence is MTTSESPDAYTESFGAHTIVKPAGPPRVGQPSWNPQRASSMPVNRYRPFAEEVEPIRLRNRTWPDRVIDRAPLWCAVDLRDGNQALIDPMSPARKRRMFDLLVRMGYKEIEVGFPSASQTDFDFVREIIEQGAIPDDVTIQVLTQCRPELIERTFQACSGAPRAIVHFYNSTSILQRRVVFRANRAEVQAIATDGARKCVEQAAKYPGTQWRFEYSPESYTGTELEYAKQVCDAVGEVIAPTPERPIIFNLPATVEMTTPNVYADSIEWMSRNLANRESVILSLHPHNDRGTAVAAAELGFAAGADRIEGCLFGNGERTGNVCLVTLGLNLFSRGVDPQIDFSNIDEIRRTVEYCNQLPVHERHPYGGDLVYTAFSGSHQDAINKGLDAMKLDADAADCDVDDMLWQVPYLPIDPRDVGRTYEAVIRVNSQSGKGGVAYIMKTDHGLSLPRRLQIEFSQVIQKIAEGTAGEGGEVSPKEMWDAFAEEYLAPVRPLERIRQHVDAADDDGGTTSITATVKINGVETEISGSGNGPLAAFVHALADVGFDVAVLDYYEHAMSAGDDAQAAAYVEASVTIASPAQPGEAGRHASDPVTIASPAQPGEAGRHASDPVTSKTVWGVGIAPSITTASLRAVVSAVNRAAR.

Residues 1–40 (MTTSESPDAYTESFGAHTIVKPAGPPRVGQPSWNPQRASS) form a disordered region. Residues 31 to 40 (PSWNPQRASS) are compositionally biased toward polar residues. In terms of domain architecture, Pyruvate carboxyltransferase spans 72–346 (PLWCAVDLRD…DPQIDFSNID (275 aa)). Positions 81, 285, 287, and 321 each coordinate Mg(2+). Residues 491–644 (PVRPLERIRQ…VVSAVNRAAR (154 aa)) are regulatory domain. The VNTR1 repeat unit spans residues 575 to 593 (VTIASPAQPGEAGRHASDP). A disordered region spans residues 581-612 (AQPGEAGRHASDPVTIASPAQPGEAGRHASDP). The VNTR2 repeat unit spans residues 594–612 (VTIASPAQPGEAGRHASDP).

Belongs to the alpha-IPM synthase/homocitrate synthase family. LeuA type 2 subfamily. Homodimer. Requires Mg(2+) as cofactor.

The protein resides in the cytoplasm. The catalysed reaction is 3-methyl-2-oxobutanoate + acetyl-CoA + H2O = (2S)-2-isopropylmalate + CoA + H(+). The protein operates within amino-acid biosynthesis; L-leucine biosynthesis; L-leucine from 3-methyl-2-oxobutanoate: step 1/4. Functionally, catalyzes the condensation of the acetyl group of acetyl-CoA with 3-methyl-2-oxobutanoate (2-ketoisovalerate) to form 3-carboxy-3-hydroxy-4-methylpentanoate (2-isopropylmalate). The polypeptide is 2-isopropylmalate synthase (Mycobacterium tuberculosis (strain CDC 1551 / Oshkosh)).